A 357-amino-acid chain; its full sequence is RNA 3'-terminal phosphate cyclase (357 aa).

ATP-binding positions include glutamine 102 and 293–296 (HMGD). The active-site Tele-AMP-histidine intermediate is histidine 319.

Belongs to the RNA 3'-terminal cyclase family. Type 1 subfamily.

The protein localises to the cytoplasm. It catalyses the reaction a 3'-end 3'-phospho-ribonucleotide-RNA + ATP = a 3'-end 2',3'-cyclophospho-ribonucleotide-RNA + AMP + diphosphate. In terms of biological role, catalyzes the conversion of 3'-phosphate to a 2',3'-cyclic phosphodiester at the end of RNA. The mechanism of action of the enzyme occurs in 3 steps: (A) adenylation of the enzyme by ATP; (B) transfer of adenylate to an RNA-N3'P to produce RNA-N3'PP5'A; (C) and attack of the adjacent 2'-hydroxyl on the 3'-phosphorus in the diester linkage to produce the cyclic end product. The biological role of this enzyme is unknown but it is likely to function in some aspects of cellular RNA processing. This Desulfurococcus amylolyticus (strain DSM 18924 / JCM 16383 / VKM B-2413 / 1221n) (Desulfurococcus kamchatkensis) protein is RNA 3'-terminal phosphate cyclase.